The following is a 414-amino-acid chain: CinA-like protein (414 aa).

Belongs to the CinA family.

In Geobacter sp. (strain M21), this protein is CinA-like protein.